The following is a 138-amino-acid chain: Large ribosomal subunit protein uL16 (138 aa).

Positions 1–19 (MLSPKRTKYRKAHKGRIHG) are enriched in basic residues. The disordered stretch occupies residues 1-21 (MLSPKRTKYRKAHKGRIHGNA).

Belongs to the universal ribosomal protein uL16 family. In terms of assembly, part of the 50S ribosomal subunit.

Its function is as follows. Binds 23S rRNA and is also seen to make contacts with the A and possibly P site tRNAs. The protein is Large ribosomal subunit protein uL16 of Granulibacter bethesdensis (strain ATCC BAA-1260 / CGDNIH1).